Here is a 121-residue protein sequence, read N- to C-terminus: Large ribosomal subunit protein uL14 (121 aa).

This sequence belongs to the universal ribosomal protein uL14 family. In terms of assembly, part of the 50S ribosomal subunit. Forms a cluster with proteins L3 and L19. In the 70S ribosome, L14 and L19 interact and together make contacts with the 16S rRNA in bridges B5 and B8.

Functionally, binds to 23S rRNA. Forms part of two intersubunit bridges in the 70S ribosome. This Aquifex aeolicus (strain VF5) protein is Large ribosomal subunit protein uL14.